The chain runs to 408 residues: MYHRHSAPPPPGWSGGYPPRQQQWPPPQPYEYPPYPPQGPPPAHTFPPPAHRDYPSPYPTPPPHSPSPYQHPHHGHSQSWSVPAVPPRPPLEAQQFGNGAPSHYRFQYSACTGRRRALLIGINYIGQPNQLRGCINDVTNMSTFLHERYGYRREDMVILTDDQKNPLSIPTKANILRAMQWLVKDAQPNDSLFLHFSGHGGRTPDLDGDEEDGYDDVIYPVDYRVAGHIVDDEMHNIMVRPLRPGVRLTVIFDSCHSGTALDLPYVYSTQGILKEPNLAKEAAQDLFSAISSYGKGDLSGVAMTAIGFLKKAAKGDSARQRTVMTKTSPADVVMFSGSKDTQTSADTFQDGEARGALSWAFIKSLKQWPNQSYLQLLNSIRAQLDGKYTQKPQLSCSHPLDVNLLFVM.

The disordered stretch occupies residues 1-98 (MYHRHSAPPP…PPLEAQQFGN (98 aa)). Pro residues-rich tracts occupy residues 24-49 (WPPPQPYEYPPYPPQGPPPAHTFPPP) and 56-66 (SPYPTPPPHSP). Residues His199 and Cys255 contribute to the active site.

The protein belongs to the peptidase C14B family.

Involved in cell death (apoptosis). Required for the apoptotic-like loss of membrane phospholipid asymmetry at stationary phase and facilitates growth under conditions of endoplasmic reticulum stress. The polypeptide is Metacaspase-1B (casB) (Aspergillus fumigatus (strain CBS 144.89 / FGSC A1163 / CEA10) (Neosartorya fumigata)).